A 179-amino-acid polypeptide reads, in one-letter code: Protein HEADING DATE 3A (179 aa).

The protein belongs to the phosphatidylethanolamine-binding protein family. In terms of tissue distribution, expressed in the inner region of the SAM, stem and leaf blade vascular tissues (at protein level).

The protein localises to the cytoplasm. It is found in the nucleus. Functionally, probable mobile flower-promoting signal (florigen) that moves from the leaf to the shoot apical meristem (SAM) and induces flowering. Promotes the transition from vegetative growth to flowering downstream of HD1 and EHD1 under short day (SD) conditions. Acts upstream of MADS14 and MADS15. This is Protein HEADING DATE 3A (HD3A) from Oryza sativa subsp. japonica (Rice).